The chain runs to 333 residues: Glycerol-3-phosphate dehydrogenase [NAD(P)+] (333 aa).

The NADPH site is built by Tyr-14, His-34, and Lys-108. Residues Lys-108, Gly-137, and Thr-139 each coordinate sn-glycerol 3-phosphate. An NADPH-binding site is contributed by Ala-141. Sn-glycerol 3-phosphate is bound by residues Lys-193, Asp-247, Ser-257, Arg-258, and Asn-259. The Proton acceptor role is filled by Lys-193. Arg-258 is a binding site for NADPH. Residues Leu-282 and Glu-284 each coordinate NADPH.

The protein belongs to the NAD-dependent glycerol-3-phosphate dehydrogenase family.

Its subcellular location is the cytoplasm. The enzyme catalyses sn-glycerol 3-phosphate + NAD(+) = dihydroxyacetone phosphate + NADH + H(+). The catalysed reaction is sn-glycerol 3-phosphate + NADP(+) = dihydroxyacetone phosphate + NADPH + H(+). The protein operates within membrane lipid metabolism; glycerophospholipid metabolism. Catalyzes the reduction of the glycolytic intermediate dihydroxyacetone phosphate (DHAP) to sn-glycerol 3-phosphate (G3P), the key precursor for phospholipid synthesis. This is Glycerol-3-phosphate dehydrogenase [NAD(P)+] from Blochmanniella floridana.